A 60-amino-acid polypeptide reads, in one-letter code: uncharacterized protein (60 aa).

A signal peptide spans 1–21 (MNKLLKLFFITIIIYNNIAFA).

This is an uncharacterized protein from Rickettsia prowazekii (strain Madrid E).